We begin with the raw amino-acid sequence, 305 residues long: tRNA pseudouridine synthase B (305 aa).

D39 functions as the Nucleophile in the catalytic mechanism.

This sequence belongs to the pseudouridine synthase TruB family. Type 1 subfamily.

It catalyses the reaction uridine(55) in tRNA = pseudouridine(55) in tRNA. Its function is as follows. Responsible for synthesis of pseudouridine from uracil-55 in the psi GC loop of transfer RNAs. The sequence is that of tRNA pseudouridine synthase B from Staphylococcus epidermidis (strain ATCC 35984 / DSM 28319 / BCRC 17069 / CCUG 31568 / BM 3577 / RP62A).